An 835-amino-acid polypeptide reads, in one-letter code: Lon protease (835 aa).

The Lon N-terminal domain occupies Leu4–Ile224. Position 412–419 (Gly412–Thr419) interacts with ATP. Residues Gln649 to Ala832 form the Lon proteolytic domain. Catalysis depends on residues Ser738 and Lys781.

The protein belongs to the peptidase S16 family. Homohexamer. Organized in a ring with a central cavity.

The protein localises to the cytoplasm. The enzyme catalyses Hydrolysis of proteins in presence of ATP.. In terms of biological role, ATP-dependent serine protease that mediates the selective degradation of mutant and abnormal proteins as well as certain short-lived regulatory proteins. Required for cellular homeostasis and for survival from DNA damage and developmental changes induced by stress. Degrades polypeptides processively to yield small peptide fragments that are 5 to 10 amino acids long. Binds to DNA in a double-stranded, site-specific manner. The chain is Lon protease from Metamycoplasma arthritidis (strain 158L3-1) (Mycoplasma arthritidis).